We begin with the raw amino-acid sequence, 113 residues long: MTSEQFEYHLTGKEILEKEFKTGLRGYNPEDVDEFLDMVIKDYSTFTQEIEALQAENIRLVQELDNAPVRTTTQPAPTFQAAAQPAGTTNFDILKRLSNLEKHVFGNKLDDNE.

Residues 36-68 (LDMVIKDYSTFTQEIEALQAENIRLVQELDNAP) are a coiled coil.

This sequence belongs to the GpsB family. As to quaternary structure, forms polymers through the coiled coil domains. Interacts with PBP1, MreC and EzrA.

The protein localises to the cytoplasm. Functionally, divisome component that associates with the complex late in its assembly, after the Z-ring is formed, and is dependent on DivIC and PBP2B for its recruitment to the divisome. Together with EzrA, is a key component of the system that regulates PBP1 localization during cell cycle progression. Its main role could be the removal of PBP1 from the cell pole after pole maturation is completed. Also contributes to the recruitment of PBP1 to the division complex. Not essential for septum formation. The sequence is that of Cell cycle protein GpsB from Listeria innocua serovar 6a (strain ATCC BAA-680 / CLIP 11262).